A 173-amino-acid polypeptide reads, in one-letter code: DASH complex subunit SPC19 (173 aa).

Belongs to the DASH complex SPC19 family. In terms of assembly, component of the DASH complex consisting of ASK1, DAD1, DAD2, DAD3, DAD4, DAM1, DUO1, HSK3, SPC19 and SPC34, with a stoichiometry of one copy of each subunit per complex. Multiple DASH complexes oligomerize to form a ring that encircles spindle microtubules and organizes the rod-like NDC80 complexes of the outer kinetochore. DASH complex oligomerization strengthens microtubule attachments. On cytoplasmic microtubules, DASH complexes appear to form patches instead of rings.

It localises to the nucleus. The protein resides in the cytoplasm. The protein localises to the cytoskeleton. It is found in the spindle. Its subcellular location is the chromosome. It localises to the centromere. The protein resides in the kinetochore. Its function is as follows. Component of the DASH complex that connects microtubules with kinetochores and couples microtubule depolymerisation to chromosome movement; it is involved in retrieving kinetochores to the spindle poles before their re-orientation on the spindle in early mitosis and allows microtubule depolymerization to pull chromosomes apart and resist detachment during anaphase. Kinetochores, consisting of a centromere-associated inner segment and a microtubule-contacting outer segment, play a crucial role in chromosome segregation by mediating the physical connection between centromeric DNA and microtubules. Kinetochores also serve as an input point for the spindle assembly checkpoint, which delays anaphase until all chromosomes have bioriented on the mitotic spindle. This Chaetomium thermophilum (strain DSM 1495 / CBS 144.50 / IMI 039719) (Thermochaetoides thermophila) protein is DASH complex subunit SPC19.